A 173-amino-acid chain; its full sequence is RNA silencing suppressor p19 (173 aa).

Over residues M1–G21 the composition is skewed to basic and acidic residues. The segment at M1 to D34 is disordered.

It belongs to the tombusvirus protein p19 family. In terms of assembly, homodimer.

In terms of biological role, viral suppressor of RNA silencing which binds specifically to silencing RNAs (siRNAs). Acts as a molecular caliper to specifically select siRNAs based on the length of the duplex region of the RNA. In Cucumis sativus (Cucumber), this protein is RNA silencing suppressor p19.